Consider the following 129-residue polypeptide: Small ribosomal subunit protein uS11 (129 aa).

The protein belongs to the universal ribosomal protein uS11 family. Part of the 30S ribosomal subunit. Interacts with proteins S7 and S18. Binds to IF-3.

Its function is as follows. Located on the platform of the 30S subunit, it bridges several disparate RNA helices of the 16S rRNA. Forms part of the Shine-Dalgarno cleft in the 70S ribosome. This chain is Small ribosomal subunit protein uS11, found in Pseudomonas putida (strain GB-1).